We begin with the raw amino-acid sequence, 938 residues long: Protein translocase subunit SecA 1 (938 aa).

ATP contacts are provided by residues Gln84, 102–106 (GEGKT), and Asp491. The segment at 865–938 (QTGGVATKER…QKTGRHAKRR (74 aa)) is disordered. A compositionally biased stretch (basic and acidic residues) spans 918-927 (TRKERREAAR).

It belongs to the SecA family. In terms of assembly, monomer and homodimer. Part of the essential Sec protein translocation apparatus which comprises SecA, SecYEG and auxiliary proteins SecDF. Other proteins may also be involved.

Its subcellular location is the cell membrane. It is found in the cytoplasm. The catalysed reaction is ATP + H2O + cellular proteinSide 1 = ADP + phosphate + cellular proteinSide 2.. Its function is as follows. Part of the Sec protein translocase complex. Interacts with the SecYEG preprotein conducting channel. Has a central role in coupling the hydrolysis of ATP to the transfer of proteins into and across the cell membrane, serving as an ATP-driven molecular motor driving the stepwise translocation of polypeptide chains across the membrane. This chain is Protein translocase subunit SecA 1, found in Mycolicibacterium vanbaalenii (strain DSM 7251 / JCM 13017 / BCRC 16820 / KCTC 9966 / NRRL B-24157 / PYR-1) (Mycobacterium vanbaalenii).